A 172-amino-acid polypeptide reads, in one-letter code: Orotate phosphoribosyltransferase (172 aa).

5-phospho-alpha-D-ribose 1-diphosphate contacts are provided by residues R88, K89, K92, H94, and 113 to 121 (EDVTTSGGS). The orotate site is built by T117 and R145.

This sequence belongs to the purine/pyrimidine phosphoribosyltransferase family. PyrE subfamily. In terms of assembly, homodimer. It depends on Mg(2+) as a cofactor.

It carries out the reaction orotidine 5'-phosphate + diphosphate = orotate + 5-phospho-alpha-D-ribose 1-diphosphate. Its pathway is pyrimidine metabolism; UMP biosynthesis via de novo pathway; UMP from orotate: step 1/2. Catalyzes the transfer of a ribosyl phosphate group from 5-phosphoribose 1-diphosphate to orotate, leading to the formation of orotidine monophosphate (OMP). This Methanospirillum hungatei JF-1 (strain ATCC 27890 / DSM 864 / NBRC 100397 / JF-1) protein is Orotate phosphoribosyltransferase.